A 250-amino-acid polypeptide reads, in one-letter code: ATP synthase subunit a (250 aa).

The next 6 membrane-spanning stretches (helical) occupy residues 25–45 (VSFT…FFFL), 84–104 (VFFP…VIGL), 115–135 (IVVT…YGFY), 141–161 (FLHL…IVLI), 187–209 (ALKV…WLGA), and 223–243 (ELLV…IYLN).

Belongs to the ATPase A chain family. In terms of assembly, F-type ATPases have 2 components, CF(1) - the catalytic core - and CF(0) - the membrane proton channel. CF(1) has five subunits: alpha(3), beta(3), gamma(1), delta(1), epsilon(1). CF(0) has three main subunits: a(1), b(2) and c(9-12). The alpha and beta chains form an alternating ring which encloses part of the gamma chain. CF(1) is attached to CF(0) by a central stalk formed by the gamma and epsilon chains, while a peripheral stalk is formed by the delta and b chains.

The protein localises to the cell inner membrane. Functionally, key component of the proton channel; it plays a direct role in the translocation of protons across the membrane. In Azorhizobium caulinodans (strain ATCC 43989 / DSM 5975 / JCM 20966 / LMG 6465 / NBRC 14845 / NCIMB 13405 / ORS 571), this protein is ATP synthase subunit a.